Consider the following 326-residue polypeptide: Probable cell division protein WhiA (326 aa).

The H-T-H motif DNA-binding region spans 275 to 308 (SLDELGRLADPVMTKDAIAGRIRRLLAMADKRAL).

It belongs to the WhiA family.

In terms of biological role, involved in cell division and chromosome segregation. The chain is Probable cell division protein WhiA from Pseudarthrobacter chlorophenolicus (strain ATCC 700700 / DSM 12829 / CIP 107037 / JCM 12360 / KCTC 9906 / NCIMB 13794 / A6) (Arthrobacter chlorophenolicus).